The chain runs to 216 residues: 3-keto-L-gulonate-6-phosphate decarboxylase UlaD (216 aa).

Substrate is bound at residue aspartate 11. Mg(2+)-binding residues include glutamate 33 and aspartate 62. Residue arginine 192 coordinates substrate.

The protein belongs to the HPS/KGPDC family. KGPDC subfamily. As to quaternary structure, homodimer. The cofactor is Mg(2+).

It catalyses the reaction 3-dehydro-L-gulonate 6-phosphate + H(+) = L-xylulose 5-phosphate + CO2. Its pathway is cofactor degradation; L-ascorbate degradation; D-xylulose 5-phosphate from L-ascorbate: step 2/4. In terms of biological role, catalyzes the decarboxylation of 3-keto-L-gulonate-6-P into L-xylulose-5-P. Is involved in the anaerobic L-ascorbate utilization. In Shigella boydii serotype 18 (strain CDC 3083-94 / BS512), this protein is 3-keto-L-gulonate-6-phosphate decarboxylase UlaD.